Reading from the N-terminus, the 740-residue chain is Vertnin (740 aa).

3 disordered regions span residues 485–506 (EAGE…RGLI), 560–616 (PGMQ…DQNV), and 653–673 (TQSQ…APGG). The segment covering 578-604 (QKPEGRQKPEEQQKPEGRQKPEGRQKP) has biased composition (basic and acidic residues). A compositionally biased stretch (polar residues) spans 653–667 (TQSQPHSGSLPSQTL).

This sequence belongs to the vertnin family.

Its subcellular location is the nucleus. Acts as a transcription factor that regulates development of thoracic vertebrae. The sequence is that of Vertnin (Vrtn) from Mus musculus (Mouse).